Here is a 519-residue protein sequence, read N- to C-terminus: Fatty acid--[acyl-carrier-protein] ligase ScoC (519 aa).

A Mg(2+)-binding site is contributed by T167. ATP contacts are provided by I216 and T312. Position 313 (E313) interacts with Mg(2+). 2 residues coordinate ATP: D394 and K411.

It belongs to the ATP-dependent AMP-binding enzyme family. Mg(2+) serves as cofactor.

The catalysed reaction is a medium-chain fatty acid + holo-[ACP] + ATP = a medium-chain fatty acyl-[ACP] + AMP + diphosphate. It carries out the reaction a medium-chain fatty acid + ATP + H(+) = a medium-chain fatty acyl-AMP + diphosphate. It catalyses the reaction a medium-chain fatty acyl-AMP + holo-[ACP] = a medium-chain fatty acyl-[ACP] + AMP + H(+). The enzyme catalyses octanoate + holo-[ACP] + ATP = octanoyl-[ACP] + AMP + diphosphate. The catalysed reaction is octanoate + ATP + H(+) = octanoyl-AMP + diphosphate. It carries out the reaction octanoyl-AMP + holo-[ACP] = octanoyl-[ACP] + AMP + H(+). It catalyses the reaction a (2E)-enoyl fatty acid + holo-[ACP] + ATP = a (2E)-enoyl-[ACP] + AMP + diphosphate. The enzyme catalyses a (2E)-enoyl fatty acid + ATP + H(+) = a (2E)-2-fatty-enoyl-AMP + diphosphate. The catalysed reaction is a (2E)-2-fatty-enoyl-AMP + holo-[ACP] = a (2E)-enoyl-[ACP] + AMP + H(+). It carries out the reaction (2E)-2-butenoate + holo-[ACP] + ATP = (2E)-butenoyl-[ACP] + AMP + diphosphate. It catalyses the reaction (2E)-2-butenoate + ATP + H(+) = (2E)-but-2-enoyl-AMP + diphosphate. The enzyme catalyses (2E)-but-2-enoyl-AMP + holo-[ACP] = (2E)-butenoyl-[ACP] + AMP + H(+). The catalysed reaction is a (3R)-3-isocyanyl-fatty acid + holo-[ACP] + ATP = a (3R)-3-isocyanyl-fatty acyl-[ACP] + AMP + diphosphate. It carries out the reaction a (3R)-3-isocyanyl-fatty acid + ATP + H(+) = a (3R)-3-isocyanyl-fatty acyl-AMP + diphosphate. It catalyses the reaction a (3R)-3-isocyanyl-fatty acyl-AMP + holo-[ACP] = a (3R)-3-isocyanyl-fatty acyl-[ACP] + AMP + H(+). The enzyme catalyses (3R)-3-isocyanylbutanoate + holo-[ACP] + ATP = (3R)-3-isocyanylbutanoyl-[ACP] + AMP + diphosphate. The catalysed reaction is (3R)-3-isocyanylbutanoate + ATP + H(+) = (3R)-3-isocyanylbutanoyl-AMP + diphosphate. It carries out the reaction (3R)-3-isocyanylbutanoyl-AMP + holo-[ACP] = (3R)-3-isocyanylbutanoyl-[ACP] + AMP + H(+). Its function is as follows. Acyl:acyl-carrier protein ligase involved in the biosynthesis of a unique class of isonitrile lipopeptides (INLPs). Shows a strong preference for fatty acids with a short/medium-chain length (C4-C8) in vitro, and accepts alpha,beta-unsaturated fatty acids such as crotonate, which seems to be a physiological substrate. Acts twice during the INLP pathway, catalyzing the activation of crotonate ((2E)-2-butenoate) as well as (3R)-3-isocyanylbutanoate as acyl-adenylates (acyl-AMP), and then the acyl transfer to the dedicated acyl-carrier protein ScoB. The polypeptide is Fatty acid--[acyl-carrier-protein] ligase ScoC (Streptomyces coeruleorubidus).